We begin with the raw amino-acid sequence, 127 residues long: Acetylcholine receptor subunit alpha (127 aa).

At 1–127 (ADGIFAIDQF…YFIVNVIIPC (127 aa)) the chain is on the extracellular side. Cysteine 33 and cysteine 47 are oxidised to a cystine. N-linked (GlcNAc...) asparagine glycans are attached at residues asparagine 46 and asparagine 94. An intrachain disulfide couples cysteine 97 to cysteine 98.

This sequence belongs to the ligand-gated ion channel (TC 1.A.9) family. Acetylcholine receptor (TC 1.A.9.1) subfamily. Alpha-1/CHRNA1 sub-subfamily. One of the alpha chains that assemble within the acetylcholine receptor, a pentamer of two alpha chains, a beta, a delta, and a gamma or epsilon chains.

Its subcellular location is the postsynaptic cell membrane. It localises to the cell membrane. It catalyses the reaction K(+)(in) = K(+)(out). It carries out the reaction Na(+)(in) = Na(+)(out). Upon acetylcholine binding, the AChR responds by an extensive change in conformation that affects all subunits and leads to opening of an ion-conducting channel across the plasma membrane. Does not bind alpha-bungarotoxin. This is Acetylcholine receptor subunit alpha (CHRNA1) from Natrix tessellata (Dice snake).